The primary structure comprises 284 residues: 2-dehydro-3-deoxyphosphooctonate aldolase (284 aa).

It belongs to the KdsA family.

Its subcellular location is the cytoplasm. It carries out the reaction D-arabinose 5-phosphate + phosphoenolpyruvate + H2O = 3-deoxy-alpha-D-manno-2-octulosonate-8-phosphate + phosphate. The protein operates within carbohydrate biosynthesis; 3-deoxy-D-manno-octulosonate biosynthesis; 3-deoxy-D-manno-octulosonate from D-ribulose 5-phosphate: step 2/3. Its pathway is bacterial outer membrane biogenesis; lipopolysaccharide biosynthesis. This chain is 2-dehydro-3-deoxyphosphooctonate aldolase, found in Histophilus somni (strain 2336) (Haemophilus somnus).